Reading from the N-terminus, the 631-residue chain is Phosphomethylpyrimidine synthase (631 aa).

Substrate contacts are provided by residues Asn-239, Met-268, Tyr-297, His-333, 353–355 (SRG), 394–397 (DGLR), and Glu-433. Position 437 (His-437) interacts with Zn(2+). Tyr-460 contacts substrate. Position 501 (His-501) interacts with Zn(2+). [4Fe-4S] cluster contacts are provided by Cys-581, Cys-584, and Cys-589.

Belongs to the ThiC family. Homodimer. It depends on [4Fe-4S] cluster as a cofactor.

It catalyses the reaction 5-amino-1-(5-phospho-beta-D-ribosyl)imidazole + S-adenosyl-L-methionine = 4-amino-2-methyl-5-(phosphooxymethyl)pyrimidine + CO + 5'-deoxyadenosine + formate + L-methionine + 3 H(+). Its pathway is cofactor biosynthesis; thiamine diphosphate biosynthesis. Functionally, catalyzes the synthesis of the hydroxymethylpyrimidine phosphate (HMP-P) moiety of thiamine from aminoimidazole ribotide (AIR) in a radical S-adenosyl-L-methionine (SAM)-dependent reaction. In Escherichia coli O7:K1 (strain IAI39 / ExPEC), this protein is Phosphomethylpyrimidine synthase.